A 170-amino-acid polypeptide reads, in one-letter code: Macro domain-containing protein VPA0103 (170 aa).

One can recognise a Macro domain in the interval 1-170 (MNAISLVQGD…SIWQHALTQH (170 aa)).

Belongs to the MacroD-type family.

The sequence is that of Macro domain-containing protein VPA0103 from Vibrio parahaemolyticus serotype O3:K6 (strain RIMD 2210633).